The primary structure comprises 24 residues: Unknown protein 6 (24 aa).

In Lonomia obliqua (Moth), this protein is Unknown protein 6.